Reading from the N-terminus, the 697-residue chain is Methionine--tRNA ligase (697 aa).

The short motif at 11 to 21 is the 'HIGH' region element; sequence PYANGPIHLGH. Zn(2+) is bound by residues C142, C145, C155, and C158. A 'KMSKS' region motif is present at residues 343-347; the sequence is KMSKS. An ATP-binding site is contributed by K346. The region spanning 595–697 is the tRNA-binding domain; it reads DFMKVEMTVA…DECKVGDKLA (103 aa).

Belongs to the class-I aminoacyl-tRNA synthetase family. MetG type 1 subfamily. In terms of assembly, homodimer. It depends on Zn(2+) as a cofactor.

The protein resides in the cytoplasm. The catalysed reaction is tRNA(Met) + L-methionine + ATP = L-methionyl-tRNA(Met) + AMP + diphosphate. Functionally, is required not only for elongation of protein synthesis but also for the initiation of all mRNA translation through initiator tRNA(fMet) aminoacylation. This chain is Methionine--tRNA ligase, found in Psychrobacter sp. (strain PRwf-1).